The primary structure comprises 177 residues: Cytidylate kinase (177 aa).

8–16 (GPPGGGKTT) contributes to the ATP binding site.

This sequence belongs to the cytidylate kinase family. Type 2 subfamily.

Its subcellular location is the cytoplasm. The catalysed reaction is CMP + ATP = CDP + ADP. It carries out the reaction dCMP + ATP = dCDP + ADP. This Staphylothermus marinus (strain ATCC 43588 / DSM 3639 / JCM 9404 / F1) protein is Cytidylate kinase.